The chain runs to 380 residues: Probable inactive reductase easA (380 aa).

FMN is bound by residues 25-27, A60, Q102, and H171; that span reads PMT. Substrate is bound by residues H171 and N174. Residues K223, G299, 324–325, and R325 contribute to the FMN site; that span reads GR. Position 352 (Y352) interacts with substrate.

The protein belongs to the NADH:flavin oxidoreductase/NADH oxidase family.

Its function is as follows. Probable inactive dehydrogenase; part of the gene cluster that mediates the biosynthesis of fungal ergot alkaloid ergovaline, the predominant ergopeptine product in E.festucae var. lolii. DmaW catalyzes the first step of ergot alkaloid biosynthesis by condensing dimethylallyl diphosphate (DMAP) and tryptophan to form 4-dimethylallyl-L-tryptophan. The second step is catalyzed by the methyltransferase easF that methylates 4-dimethylallyl-L-tryptophan in the presence of S-adenosyl-L-methionine, resulting in the formation of 4-dimethylallyl-L-abrine. The catalase easC and the FAD-dependent oxidoreductase easE then transform 4-dimethylallyl-L-abrine to chanoclavine-I which is further oxidized by easD in the presence of NAD(+), resulting in the formation of chanoclavine-I aldehyde. Agroclavine dehydrogenase easG then mediates the conversion of chanoclavine-I aldehyde to agroclavine via a non-enzymatic adduct reaction: the substrate is an iminium intermediate that is formed spontaneously from chanoclavine-I aldehyde in the presence of glutathione. The presence of easA is not required to complete this reaction. Further conversion of agroclavine to paspalic acid is a two-step process involving oxidation of agroclavine to elymoclavine and of elymoclavine to paspalic acid, the second step being performed by the elymoclavine oxidase cloA. Paspalic acid is then further converted to D-lysergic acid. Ergovaline is assembled from D-lysergic acid and three different amino acids by the D-lysergyl-peptide-synthetase composed of a monomudular (lpsB) and a trimodular (lpsA) nonribosomal peptide synthetase subunit. This is Probable inactive reductase easA from Epichloe festucae var. lolii (Neotyphodium lolii).